Here is a 631-residue protein sequence, read N- to C-terminus: 1-deoxy-D-xylulose-5-phosphate synthase (631 aa).

Thiamine diphosphate contacts are provided by residues His87 and 128 to 130 (GHS). Asp159 provides a ligand contact to Mg(2+). Residues 160-161 (GA), Asn188, Phe295, and Glu377 contribute to the thiamine diphosphate site. Position 188 (Asn188) interacts with Mg(2+).

The protein belongs to the transketolase family. DXPS subfamily. Homodimer. Mg(2+) serves as cofactor. Requires thiamine diphosphate as cofactor.

It carries out the reaction D-glyceraldehyde 3-phosphate + pyruvate + H(+) = 1-deoxy-D-xylulose 5-phosphate + CO2. Its pathway is metabolic intermediate biosynthesis; 1-deoxy-D-xylulose 5-phosphate biosynthesis; 1-deoxy-D-xylulose 5-phosphate from D-glyceraldehyde 3-phosphate and pyruvate: step 1/1. Catalyzes the acyloin condensation reaction between C atoms 2 and 3 of pyruvate and glyceraldehyde 3-phosphate to yield 1-deoxy-D-xylulose-5-phosphate (DXP). This is 1-deoxy-D-xylulose-5-phosphate synthase from Pseudomonas putida (strain ATCC 700007 / DSM 6899 / JCM 31910 / BCRC 17059 / LMG 24140 / F1).